A 644-amino-acid chain; its full sequence is Threonine--tRNA ligase (644 aa).

One can recognise a TGS domain in the interval 1 to 62; the sequence is MSFSVTLPDG…DSDVEIAIIT (62 aa). Residues 240–538 are catalytic; sequence DHRTIGRDLD…LTEIYKGAFP (299 aa). The Zn(2+) site is built by Cys-334, His-385, and His-515.

It belongs to the class-II aminoacyl-tRNA synthetase family. In terms of assembly, homodimer. Zn(2+) serves as cofactor.

It localises to the cytoplasm. It catalyses the reaction tRNA(Thr) + L-threonine + ATP = L-threonyl-tRNA(Thr) + AMP + diphosphate + H(+). Its function is as follows. Catalyzes the attachment of threonine to tRNA(Thr) in a two-step reaction: L-threonine is first activated by ATP to form Thr-AMP and then transferred to the acceptor end of tRNA(Thr). Also edits incorrectly charged L-seryl-tRNA(Thr). This is Threonine--tRNA ligase from Lactobacillus acidophilus (strain ATCC 700396 / NCK56 / N2 / NCFM).